The primary structure comprises 171 residues: MTSHFALFDLEPDFRLDQDRLAVRYRELVRRVHPDRFAGAPEREQRLALEEAARLNEAYQTLKSPSQRARYLLSLQGEELSQETTVQDPAFLMQQMELREELQELQDSADLAGVARFKRRLVQDQEQLNEGFAACWADPRRRDEAERLARRMQFLDKLFAEVRQLEERLDD.

One can recognise a J domain in the interval 3–75 (SHFALFDLEP…SQRARYLLSL (73 aa)).

Belongs to the HscB family. Interacts with HscA and stimulates its ATPase activity.

Its function is as follows. Co-chaperone involved in the maturation of iron-sulfur cluster-containing proteins. Seems to help targeting proteins to be folded toward HscA. This chain is Co-chaperone protein HscB homolog, found in Azotobacter vinelandii.